A 225-amino-acid chain; its full sequence is MKHLFKLDPAKNLPHNSVTRLIHSGTDGFIIGGTDNLQTEAVENLYELLAETDLPIFLEVSDESMILPEAEHFLIPVVLNTENSKWTHGLHKELIKEMGEFIPWKRVTSEGYVILNKDAKVAQLTEAKTDLTEEDIIAYARLAENIFRLPIFYIEYSGMYGNPEVAKKVSAALDDTKFWYGGGIRSKEQAAEMAEYADTIIVGNIIYEDIEKALETTTVFAKKTV.

Residue Lys6 participates in sn-glycerol 1-phosphate binding. Mg(2+) contacts are provided by Asp8 and Thr34. Residues 153 to 158 (YIEYSG), Gly183, and 203 to 204 (GN) each bind sn-glycerol 1-phosphate.

Belongs to the GGGP/HepGP synthase family. Group I subfamily. As to quaternary structure, homodimer. Mg(2+) is required as a cofactor.

It carries out the reaction sn-glycerol 1-phosphate + all-trans-heptaprenyl diphosphate = 3-heptaprenyl-sn-glycero-1-phosphate + diphosphate. It functions in the pathway membrane lipid metabolism; glycerophospholipid metabolism. Its function is as follows. Prenyltransferase that catalyzes in vivo the transfer of the heptaprenyl moiety of heptaprenyl pyrophosphate (HepPP; 35 carbon atoms) to the C3 hydroxyl of sn-glycerol-1-phosphate (G1P), producing heptaprenylglyceryl phosphate (HepGP). This reaction is an ether-bond-formation step in the biosynthesis of archaea-type G1P-based membrane lipids found in Bacillales. This chain is Heptaprenylglyceryl phosphate synthase, found in Listeria welshimeri serovar 6b (strain ATCC 35897 / DSM 20650 / CCUG 15529 / CIP 8149 / NCTC 11857 / SLCC 5334 / V8).